The sequence spans 38 residues: Large ribosomal subunit protein bL36 (38 aa).

The protein belongs to the bacterial ribosomal protein bL36 family.

The chain is Large ribosomal subunit protein bL36 from Lactobacillus acidophilus (strain ATCC 700396 / NCK56 / N2 / NCFM).